We begin with the raw amino-acid sequence, 326 residues long: MSNAPGTSKFQIDLRRHLRAQNICDNLVHLMCEIAEASKYVINAVRTGDLGVAGTSNLYGEEQLALDVLSDRIMRKRLIHSGVVCNIASEEMDEIYQCQASADGLYSVAYDPLDGSSLVDVNLAVGTIVSIYAGCDLLQPGRNQVAAMYILYGPRVSLVYTVGDGVHEFTMNNLMEFTLTRENVKMAPEGNIYAPGGLRNKYNAGDEKFIRHLEEKGCKLRYSGGFVPDINQVLMKGKGLFMYPALNGSPNGKLRVLFELNPMAFIIEHAGGAASNGSIPILDIVPESLDQRAPIYIGCREDVKTATSFVNGGKQEVKMAGSFVNG.

Mg(2+)-binding residues include glutamate 90, aspartate 111, leucine 113, and aspartate 114. Substrate is bound by residues aspartate 114–serine 117, tyrosine 222, and lysine 253. Glutamate 259 is a Mg(2+) binding site.

This sequence belongs to the FBPase class 1 family. As to quaternary structure, homotetramer. It depends on Mg(2+) as a cofactor.

The protein localises to the cytoplasm. It carries out the reaction beta-D-fructose 1,6-bisphosphate + H2O = beta-D-fructose 6-phosphate + phosphate. It functions in the pathway carbohydrate biosynthesis; gluconeogenesis. The chain is Fructose-1,6-bisphosphatase class 1 from Citrifermentans bemidjiense (strain ATCC BAA-1014 / DSM 16622 / JCM 12645 / Bem) (Geobacter bemidjiensis).